A 460-amino-acid polypeptide reads, in one-letter code: WD repeat-containing protein 41 (460 aa).

WD repeat units follow at residues 40–79 (EAHR…KLLE), 82–128 (GHTQ…QIQR), 131–168 (CFQS…LCKT), 220–258 (DHQD…VQAC), 321–359 (AHDS…QLAA), and 403–441 (GHSS…SGVR).

As to quaternary structure, component of the C9orf72-SMCR8 complex, at least composed of C9orf72, SMCR8 and WDR41. The complex is formed of two protomers, each individually consisting of one molecule each of C9orf72, SMCR8 and WDR41. The protomers homodimerize via an interaction between C9orf72 (via C-terminus) and SMCR8 (via N-terminus). Within each protomer SMCR8 (via DENN domain) acts as a bridging protein between WDR41 (via C-terminus and N-terminus) and C9orf72 (via C-terminus). The C9orf72-SMCR8 complex associates with the ULK1/ATG1 kinase complex.

Its subcellular location is the cytoplasm. Non-catalytic component of the C9orf72-SMCR8 complex, a complex that has guanine nucleotide exchange factor (GEF) activity and regulates autophagy. The C9orf72-SMCR8 complex promotes the exchange of GDP to GTP, converting inactive GDP-bound RAB8A and RAB39B into their active GTP-bound form, thereby promoting autophagosome maturation. As part of the C9orf72-SMCR8 complex, stimulates RAB8A and RAB11A GTPase activity in vitro, however WDR42 is shown not be an essential complex component for this function. The C9orf72-SMCR8 complex also acts as a negative regulator of autophagy initiation by interacting with the ULK1/ATG1 kinase complex and inhibiting its protein kinase activity. In Mus musculus (Mouse), this protein is WD repeat-containing protein 41.